Reading from the N-terminus, the 64-residue chain is Large ribosomal subunit protein bL28 (64 aa).

A disordered region spans residues 1–21; the sequence is MAKKDQLTLRGPLYGNNRSHS.

The protein belongs to the bacterial ribosomal protein bL28 family.

The polypeptide is Large ribosomal subunit protein bL28 (Mycoplasma genitalium (strain ATCC 33530 / DSM 19775 / NCTC 10195 / G37) (Mycoplasmoides genitalium)).